The chain runs to 883 residues: Leucine--tRNA ligase (883 aa).

The short motif at 43–53 (PYPSGRIHIGH) is the 'HIGH' region element. A 'KMSKS' region motif is present at residues 630 to 634 (KMSKS). Position 633 (Lys633) interacts with ATP.

Belongs to the class-I aminoacyl-tRNA synthetase family.

It localises to the cytoplasm. The catalysed reaction is tRNA(Leu) + L-leucine + ATP = L-leucyl-tRNA(Leu) + AMP + diphosphate. This is Leucine--tRNA ligase from Nitrobacter winogradskyi (strain ATCC 25391 / DSM 10237 / CIP 104748 / NCIMB 11846 / Nb-255).